The sequence spans 706 residues: Serine/threonine-protein kinase BUR1 (706 aa).

Residues Y38–F339 form the Protein kinase domain. ATP-binding positions include I44–V52 and K67. The active-site Proton acceptor is D168. Composition is skewed to basic and acidic residues over residues L360–R523, D545–R570, and D594–D623. The tract at residues L360–R706 is disordered. The span at G625–P648 shows a compositional bias: pro residues. Residues W659 to R706 show a composition bias toward basic and acidic residues.

Belongs to the protein kinase superfamily. CMGC Ser/Thr protein kinase family. CDC2/CDKX subfamily.

It localises to the nucleus. It catalyses the reaction L-seryl-[protein] + ATP = O-phospho-L-seryl-[protein] + ADP + H(+). The catalysed reaction is L-threonyl-[protein] + ATP = O-phospho-L-threonyl-[protein] + ADP + H(+). The enzyme catalyses [DNA-directed RNA polymerase] + ATP = phospho-[DNA-directed RNA polymerase] + ADP + H(+). Serine/threonine-protein kinase involved in transcription regulation. Phosphorylates the UBC2/RAD6 ubiquitin-conjugating enzyme (E2), leading to monoubiquitination of histone H2B and the silencing of telomeric-associated genes. Also required for histone H3 methylation. Necessary for the recovery from pheromone-induced growth arrest in the cell cycle G1 phase. In Yarrowia lipolytica (strain CLIB 122 / E 150) (Yeast), this protein is Serine/threonine-protein kinase BUR1 (BUR1).